We begin with the raw amino-acid sequence, 360 residues long: Phosphoserine aminotransferase (360 aa).

Arg-42 contributes to the L-glutamate binding site. 4 residues coordinate pyridoxal 5'-phosphate: Trp-102, Thr-152, Asp-171, and Gln-194. Lys-195 carries the N6-(pyridoxal phosphate)lysine modification. 237–238 (NT) is a binding site for pyridoxal 5'-phosphate.

It belongs to the class-V pyridoxal-phosphate-dependent aminotransferase family. SerC subfamily. Homodimer. Requires pyridoxal 5'-phosphate as cofactor.

Its subcellular location is the cytoplasm. It catalyses the reaction O-phospho-L-serine + 2-oxoglutarate = 3-phosphooxypyruvate + L-glutamate. The enzyme catalyses 4-(phosphooxy)-L-threonine + 2-oxoglutarate = (R)-3-hydroxy-2-oxo-4-phosphooxybutanoate + L-glutamate. It participates in amino-acid biosynthesis; L-serine biosynthesis; L-serine from 3-phospho-D-glycerate: step 2/3. The protein operates within cofactor biosynthesis; pyridoxine 5'-phosphate biosynthesis; pyridoxine 5'-phosphate from D-erythrose 4-phosphate: step 3/5. Its function is as follows. Catalyzes the reversible conversion of 3-phosphohydroxypyruvate to phosphoserine and of 3-hydroxy-2-oxo-4-phosphonooxybutanoate to phosphohydroxythreonine. The polypeptide is Phosphoserine aminotransferase (Coxiella burnetii (strain CbuK_Q154) (Coxiella burnetii (strain Q154))).